The sequence spans 447 residues: ATP-dependent protease ATPase subunit HslU (447 aa).

ATP contacts are provided by residues I17 and 59-64; that span reads GVGKTE. A disordered region spans residues 136–160; the sequence is PPARGGFQGEPTAEEKPTEKKESAT. The span at 148–159 shows a compositional bias: basic and acidic residues; that stretch reads AEEKPTEKKESA. 3 residues coordinate ATP: D260, E325, and R397.

The protein belongs to the ClpX chaperone family. HslU subfamily. As to quaternary structure, a double ring-shaped homohexamer of HslV is capped on each side by a ring-shaped HslU homohexamer. The assembly of the HslU/HslV complex is dependent on binding of ATP.

It localises to the cytoplasm. Its function is as follows. ATPase subunit of a proteasome-like degradation complex; this subunit has chaperone activity. The binding of ATP and its subsequent hydrolysis by HslU are essential for unfolding of protein substrates subsequently hydrolyzed by HslV. HslU recognizes the N-terminal part of its protein substrates and unfolds these before they are guided to HslV for hydrolysis. The sequence is that of ATP-dependent protease ATPase subunit HslU from Coxiella burnetii (strain Dugway 5J108-111).